The following is a 179-amino-acid chain: MARLNELYNKEMVPQLMKDFNYRNVMEVPKLEKIVVNMGLGEAIQNVKILDSAVDEMAVITGQKPIITKAKKSIAGFKLRQGMPIGCAVTLRKDKMYEFLDRLVNVSLPRVRDFKGISGKAFDGNGNYSLGVKEQLIFPEINYDKIDKIKGLNITIVTTAKSDEEGKALLKLFGMPFRN.

This sequence belongs to the universal ribosomal protein uL5 family. Part of the 50S ribosomal subunit; part of the 5S rRNA/L5/L18/L25 subcomplex. Contacts the 5S rRNA and the P site tRNA. Forms a bridge to the 30S subunit in the 70S ribosome.

Its function is as follows. This is one of the proteins that bind and probably mediate the attachment of the 5S RNA into the large ribosomal subunit, where it forms part of the central protuberance. In the 70S ribosome it contacts protein S13 of the 30S subunit (bridge B1b), connecting the 2 subunits; this bridge is implicated in subunit movement. Contacts the P site tRNA; the 5S rRNA and some of its associated proteins might help stabilize positioning of ribosome-bound tRNAs. This is Large ribosomal subunit protein uL5 from Geotalea uraniireducens (strain Rf4) (Geobacter uraniireducens).